Reading from the N-terminus, the 200-residue chain is Casparian strip membrane protein 2 (200 aa).

At 1–37 (MMKSDSVAIDVPESSSVAKRKAPFMANIRDENGGYKK) the chain is on the cytoplasmic side. The helical transmembrane segment at 38–58 (GLAIFDFILRLGAIAAALGAA) threads the bilayer. At 59-88 (STMGTSDETLPFFTQFFQFNAGYDDFPTFQ) the chain is on the extracellular side. A helical membrane pass occupies residues 89-109 (FFVIAMAMVAGYLVLSLPFSI). At 110–121 (VSICRPHAAGPR) the chain is on the cytoplasmic side. A helical membrane pass occupies residues 122–142 (ILLFILDTVALTLNAAAGAAA). Topologically, residues 143–175 (ADIVYLAHNGNQTTNWLAICLQFGDFCREVSGS) are extracellular. Residue asparagine 153 is glycosylated (N-linked (GlcNAc...) asparagine). The chain crosses the membrane as a helical span at residues 176 to 196 (VVASFASVVILMVLVVMSGLA). Topologically, residues 197–200 (LRRY) are cytoplasmic.

Belongs to the Casparian strip membrane proteins (CASP) family. As to quaternary structure, homodimer and heterodimers.

The protein resides in the cell membrane. Functionally, regulates membrane-cell wall junctions and localized cell wall deposition. Required for establishment of the Casparian strip membrane domain (CSD) and the subsequent formation of Casparian strips, a cell wall modification of the root endodermis that determines an apoplastic barrier between the intraorganismal apoplasm and the extraorganismal apoplasm and prevents lateral diffusion. The protein is Casparian strip membrane protein 2 of Ricinus communis (Castor bean).